A 76-amino-acid chain; its full sequence is Beta-defensin 121 (76 aa).

A signal peptide spans 1-15 (MKLLLLLLTVTLLLA). Cystine bridges form between Cys-23-Cys-50, Cys-30-Cys-44, and Cys-34-Cys-51.

This sequence belongs to the beta-defensin family. As to expression, abundant expression in the male reproductive tract only.

The protein resides in the secreted. Its function is as follows. Has antibacterial activity. The protein is Beta-defensin 121 (DEFB121) of Macaca mulatta (Rhesus macaque).